The primary structure comprises 383 residues: Serpin B5 (383 aa).

N-linked (GlcNAc...) asparagine glycans are attached at residues Asn-106, Asn-133, Asn-176, and Asn-361.

This sequence belongs to the serpin family. Ov-serpin subfamily.

The protein resides in the secreted. It localises to the extracellular space. Its function is as follows. May not exhibit serine protease inhibitory activity. This Xenopus laevis (African clawed frog) protein is Serpin B5 (serpinb5).